Reading from the N-terminus, the 368-residue chain is Chaperone protein DnaJ (368 aa).

Positions 5–70 constitute a J domain; the sequence is DYYQVLGVPR…KKRKLYDTHG (66 aa). The CR-type zinc-finger motif lies at 124 to 201; the sequence is GVERQIQIPT…CNGAGRVEDH (78 aa). Zn(2+) is bound by residues C137, C140, C153, C156, C175, C178, C189, and C192. CXXCXGXG motif repeat units lie at residues 137–144, 153–160, 175–182, and 189–196; these read CTHCHGSG, CGTCRGSG, CPHCGGRG, and CKVCNGAG.

This sequence belongs to the DnaJ family. In terms of assembly, homodimer. Zn(2+) is required as a cofactor.

The protein resides in the cytoplasm. Participates actively in the response to hyperosmotic and heat shock by preventing the aggregation of stress-denatured proteins and by disaggregating proteins, also in an autonomous, DnaK-independent fashion. Unfolded proteins bind initially to DnaJ; upon interaction with the DnaJ-bound protein, DnaK hydrolyzes its bound ATP, resulting in the formation of a stable complex. GrpE releases ADP from DnaK; ATP binding to DnaK triggers the release of the substrate protein, thus completing the reaction cycle. Several rounds of ATP-dependent interactions between DnaJ, DnaK and GrpE are required for fully efficient folding. Also involved, together with DnaK and GrpE, in the DNA replication of plasmids through activation of initiation proteins. This chain is Chaperone protein DnaJ, found in Xylella fastidiosa (strain 9a5c).